The chain runs to 368 residues: Methionine import ATP-binding protein MetN (368 aa).

Residues 5–260 (IELNNLSVQF…PKEALTKQFI (256 aa)) enclose the ABC transporter domain. Residue 41-48 (GYSGAGKS) coordinates ATP.

It belongs to the ABC transporter superfamily. Methionine importer (TC 3.A.1.24) family. As to quaternary structure, the complex is composed of two ATP-binding proteins (MetN), two transmembrane proteins (MetI) and a solute-binding protein (MetQ).

It is found in the cell membrane. The catalysed reaction is L-methionine(out) + ATP + H2O = L-methionine(in) + ADP + phosphate + H(+). The enzyme catalyses D-methionine(out) + ATP + H2O = D-methionine(in) + ADP + phosphate + H(+). Part of the ABC transporter complex MetNIQ involved in methionine import. Responsible for energy coupling to the transport system. This Lactococcus lactis subsp. cremoris (strain SK11) protein is Methionine import ATP-binding protein MetN.